Reading from the N-terminus, the 347-residue chain is Phenylalanine--tRNA ligase alpha subunit (347 aa).

A Mg(2+)-binding site is contributed by E261.

It belongs to the class-II aminoacyl-tRNA synthetase family. Phe-tRNA synthetase alpha subunit type 1 subfamily. As to quaternary structure, tetramer of two alpha and two beta subunits. The cofactor is Mg(2+).

It localises to the cytoplasm. It catalyses the reaction tRNA(Phe) + L-phenylalanine + ATP = L-phenylalanyl-tRNA(Phe) + AMP + diphosphate + H(+). The chain is Phenylalanine--tRNA ligase alpha subunit from Streptococcus equi subsp. zooepidemicus (strain MGCS10565).